The primary structure comprises 289 residues: Pantoate kinase (289 aa).

The protein belongs to the GHMP kinase family. PoK subfamily.

The catalysed reaction is (R)-pantoate + ATP = (R)-4-phosphopantoate + ADP + H(+). Its pathway is cofactor biosynthesis; coenzyme A biosynthesis. In terms of biological role, phosphorylates (R)-pantoate to form (R)-4-phosphopantoate in the CoA biosynthesis pathway. ATP is the best phosphate donor. Can be replaced with UTP, with lower efficiency. The chain is Pantoate kinase from Methanospirillum hungatei JF-1 (strain ATCC 27890 / DSM 864 / NBRC 100397 / JF-1).